Reading from the N-terminus, the 870-residue chain is Translation initiation factor IF-2 (870 aa).

Residues 49–284 are disordered; sequence SFQNSAPAEK…TKRKERPLPE (236 aa). 2 stretches are compositionally biased toward basic and acidic residues: residues 70-81 and 94-109; these read RKNEKKQEDNAG and QNND…RDHS. A compositionally biased stretch (low complexity) spans 116–127; sequence KPKAAALLQQFK. Composition is skewed to basic and acidic residues over residues 144–159 and 168–183; these read AKKE…KKEQ and NKES…EKKV. Basic residues predominate over residues 254 to 279; it reads RKRRKNKNKKRKQEQKPKKQITKRKE. In terms of domain architecture, tr-type G spans 371–540; that stretch reads KRPPVVTIMG…LLQADMMELK (170 aa). The G1 stretch occupies residues 380–387; that stretch reads GHVDHGKT. 380-387 provides a ligand contact to GTP; the sequence is GHVDHGKT. The tract at residues 405–409 is G2; the sequence is GITQK. Residues 426-429 form a G3 region; the sequence is DTPG. Residues 426 to 430 and 480 to 483 contribute to the GTP site; these read DTPGH and NKMD. The tract at residues 480 to 483 is G4; the sequence is NKMD. The tract at residues 516-518 is G5; it reads SAR.

The protein belongs to the TRAFAC class translation factor GTPase superfamily. Classic translation factor GTPase family. IF-2 subfamily.

It is found in the cytoplasm. In terms of biological role, one of the essential components for the initiation of protein synthesis. Protects formylmethionyl-tRNA from spontaneous hydrolysis and promotes its binding to the 30S ribosomal subunits. Also involved in the hydrolysis of GTP during the formation of the 70S ribosomal complex. The protein is Translation initiation factor IF-2 of Lactobacillus helveticus (strain DPC 4571).